The primary structure comprises 247 residues: Carboxy-S-adenosyl-L-methionine synthase (247 aa).

S-adenosyl-L-methionine contacts are provided by residues Tyr39, 64–66 (GCS), 89–90 (DN), 117–118 (DI), Asn132, and Arg199.

This sequence belongs to the class I-like SAM-binding methyltransferase superfamily. Cx-SAM synthase family. As to quaternary structure, homodimer.

It catalyses the reaction prephenate + S-adenosyl-L-methionine = carboxy-S-adenosyl-L-methionine + 3-phenylpyruvate + H2O. Catalyzes the conversion of S-adenosyl-L-methionine (SAM) to carboxy-S-adenosyl-L-methionine (Cx-SAM). The sequence is that of Carboxy-S-adenosyl-L-methionine synthase from Shigella boydii serotype 4 (strain Sb227).